Consider the following 271-residue polypeptide: MRPSDLTRFKQKGQPIAVLTAWDSLSAALAEAAGADVLLIGDSLAMVALGHATTLPVSLDQMLHHTQAVARGLTTMPADQPLLVCDLPFLSYQCGEDRAVAAAGRLLKESSAAAVKLEGAEPEVVAVIDRLVRMGIPVMGHLGLTPQAVHRLGYRRQATDAISQERLLEQACTLEQKGCFSLVLEHVPAELACRVQQALTIPVIGIGAGDDCDGQVRVTADLLGLTAKQPPFSPALVDGRRLFIDALKGWVNQTRNHTPPTNGRITQADRT.

2 residues coordinate Mg(2+): D42 and D86. Residues 42–43, D86, and K116 each bind 3-methyl-2-oxobutanoate; that span reads DS. E118 is a Mg(2+) binding site. The Proton acceptor role is filled by E185.

The protein belongs to the PanB family. In terms of assembly, homodecamer; pentamer of dimers. It depends on Mg(2+) as a cofactor.

The protein localises to the cytoplasm. The enzyme catalyses 3-methyl-2-oxobutanoate + (6R)-5,10-methylene-5,6,7,8-tetrahydrofolate + H2O = 2-dehydropantoate + (6S)-5,6,7,8-tetrahydrofolate. It participates in cofactor biosynthesis; (R)-pantothenate biosynthesis; (R)-pantoate from 3-methyl-2-oxobutanoate: step 1/2. Catalyzes the reversible reaction in which hydroxymethyl group from 5,10-methylenetetrahydrofolate is transferred onto alpha-ketoisovalerate to form ketopantoate. The protein is 3-methyl-2-oxobutanoate hydroxymethyltransferase of Synechococcus sp. (strain CC9605).